The primary structure comprises 329 residues: DNA-directed RNA polymerase subunit alpha (329 aa).

The segment at 1–235 (MQNSIIGFLK…EQLEAFVDLR (235 aa)) is alpha N-terminal domain (alpha-NTD). The interval 249-329 (FEPILLRPVD…KWPPSSILEE (81 aa)) is alpha C-terminal domain (alpha-CTD).

It belongs to the RNA polymerase alpha chain family. In terms of assembly, homodimer. The RNAP catalytic core consists of 2 alpha, 1 beta, 1 beta' and 1 omega subunit. When a sigma factor is associated with the core the holoenzyme is formed, which can initiate transcription.

The enzyme catalyses RNA(n) + a ribonucleoside 5'-triphosphate = RNA(n+1) + diphosphate. In terms of biological role, DNA-dependent RNA polymerase catalyzes the transcription of DNA into RNA using the four ribonucleoside triphosphates as substrates. The polypeptide is DNA-directed RNA polymerase subunit alpha (Buchnera aphidicola subsp. Schizaphis graminum (strain Sg)).